The sequence spans 196 residues: NADPH:quinone oxidoreductase (196 aa).

The protein belongs to the SsuE family. Homotetramer. The cofactor is FMN.

The protein resides in the cell membrane. The catalysed reaction is a quinone + NADH + H(+) = a quinol + NAD(+). The enzyme catalyses a quinone + NADPH + H(+) = a quinol + NADP(+). Its function is as follows. The enzyme apparently serves as a quinone reductase in connection with conjugation reactions of hydroquinones involved in detoxification pathways. The chain is NADPH:quinone oxidoreductase (NQR) from Arabidopsis thaliana (Mouse-ear cress).